The primary structure comprises 628 residues: tRNA uridine 5-carboxymethylaminomethyl modification enzyme MnmG (628 aa).

FAD-binding positions include 14–19 (GAGHAG), V126, and S181. 273–287 (GPRYCPSIEDKVVRF) is a binding site for NAD(+). Q370 is an FAD binding site.

Belongs to the MnmG family. As to quaternary structure, homodimer. Heterotetramer of two MnmE and two MnmG subunits. Requires FAD as cofactor.

It localises to the cytoplasm. Its function is as follows. NAD-binding protein involved in the addition of a carboxymethylaminomethyl (cmnm) group at the wobble position (U34) of certain tRNAs, forming tRNA-cmnm(5)s(2)U34. The protein is tRNA uridine 5-carboxymethylaminomethyl modification enzyme MnmG of Exiguobacterium sibiricum (strain DSM 17290 / CCUG 55495 / CIP 109462 / JCM 13490 / 255-15).